We begin with the raw amino-acid sequence, 226 residues long: Lipoprotein-releasing system ATP-binding protein LolD (226 aa).

The region spanning 5–226 (LRCEKISKFY…MADGVLREAS (222 aa)) is the ABC transporter domain. 41–48 (GSSGSGKS) provides a ligand contact to ATP.

It belongs to the ABC transporter superfamily. Lipoprotein translocase (TC 3.A.1.125) family. The complex is composed of two ATP-binding proteins (LolD) and two transmembrane proteins (LolC and LolE).

The protein resides in the cell inner membrane. Its function is as follows. Part of the ABC transporter complex LolCDE involved in the translocation of mature outer membrane-directed lipoproteins, from the inner membrane to the periplasmic chaperone, LolA. Responsible for the formation of the LolA-lipoprotein complex in an ATP-dependent manner. This chain is Lipoprotein-releasing system ATP-binding protein LolD, found in Haemophilus ducreyi (strain 35000HP / ATCC 700724).